The sequence spans 183 residues: MPPIIKRRVMRKIIIASQNPAKVNAVRSAFSTVFPDQEWEFIGVSVPSEVADQPMSDEETKQGALNRVRNAKQRHPGAEYYVGLEAGIEENKTFAWMIVESDQQRGESRSACLMLPPLVLERLRQAKELGDVMDEVFGTENIKQKGGAIGLLTRHHLTRSTVYHQALILALIPFINPEHYPSA.

This sequence belongs to the YjjX NTPase family. Homodimer. The cofactor is Mg(2+). Requires Mn(2+) as cofactor.

It carries out the reaction XTP + H2O = XDP + phosphate + H(+). It catalyses the reaction ITP + H2O = IDP + phosphate + H(+). Its function is as follows. Phosphatase that hydrolyzes non-canonical purine nucleotides such as XTP and ITP to their respective diphosphate derivatives. Probably excludes non-canonical purines from DNA/RNA precursor pool, thus preventing their incorporation into DNA/RNA and avoiding chromosomal lesions. The polypeptide is Inosine/xanthosine triphosphatase (Vibrio cholerae serotype O1 (strain ATCC 39315 / El Tor Inaba N16961)).